A 558-amino-acid chain; its full sequence is uncharacterized protein (558 aa).

12 helical membrane passes run 21–41 (IFCFYIYCILFGSLLLFLPIA), 69–89 (FLDALFLSTSAFSDTGLSTVV), 100–120 (IVLAVLLQLGGIGFVVIAFLA), 160–180 (IIFLFIVELIYGFLYGILFYF), 220–240 (AFQAGFFHSLSAVNNAGIDLI), 251–271 (GLGIIIQWLTISQIIFGGIGY), 303–323 (VITNIVVILLFFTLLLMVEFI), 386–406 (VFPVASEIQTTKIIIALAMFI), 413–433 (TAGGIRTTTLAVIFLALVAKF), 454–474 (AFLVLIISLIAVLLTAVLLPL), 479–499 (PVSFIDALFETTSAFGTVGLS), and 519–539 (ALCLLMVMGQVGVSSSVLTFV).

The protein belongs to the TrkH potassium transport family.

The protein localises to the cell membrane. This is an uncharacterized protein from Mycoplasma genitalium (strain ATCC 33530 / DSM 19775 / NCTC 10195 / G37) (Mycoplasmoides genitalium).